The primary structure comprises 409 residues: Peptidase T (409 aa).

His-78 contacts Zn(2+). Residue Asp-80 is part of the active site. Residue Asp-140 coordinates Zn(2+). The Proton acceptor role is filled by Glu-173. The Zn(2+) site is built by Glu-174, Asp-196, and His-379.

This sequence belongs to the peptidase M20B family. It depends on Zn(2+) as a cofactor.

It localises to the cytoplasm. It carries out the reaction Release of the N-terminal residue from a tripeptide.. Its function is as follows. Cleaves the N-terminal amino acid of tripeptides. The protein is Peptidase T of Serratia proteamaculans (strain 568).